The primary structure comprises 231 residues: NifU-like protein 1, chloroplastic (231 aa).

A chloroplast-targeting transit peptide spans 1–69 (MMASLATSIS…SSQGEKISPL (69 aa)).

This sequence belongs to the NifU family. Homodimer; disulfide-linked. In terms of tissue distribution, predominantly expressed in floral stalks and siliques. Expressed in leaves, cauline leaves, flower stalks and flowers (at protein level).

The protein localises to the plastid. Its subcellular location is the chloroplast stroma. Its function is as follows. Molecular scaffold for [Fe-S] cluster assembly of chloroplastic iron-sulfur proteins. The chain is NifU-like protein 1, chloroplastic (NIFU1) from Arabidopsis thaliana (Mouse-ear cress).